The chain runs to 384 residues: WD repeat-containing protein 74 (384 aa).

6 WD repeats span residues 40 to 80 (RREE…FLSQ), 83 to 122 (CPGG…ASSD), 128 to 168 (KVGP…EPVF), 179 to 220 (DLRV…RRPV), 224 to 266 (TYGE…GCLK), and 267 to 306 (GLAG…GLEH). Position 214 is a phosphoserine (S214). N6-methyllysine is present on K311. Residues 320–384 (SGRDNWEDEP…KKKRPGSTSP (65 aa)) are required for nucleolar and nuclear location. The tract at residues 323 to 384 (DNWEDEPQEP…KKKRPGSTSP (62 aa)) is disordered. The segment covering 371–384 (QRRKKKKRPGSTSP) has biased composition (basic residues).

In terms of assembly, isoform 1 interacts (through WDR repeats) with NVL; the interaction is independent of RNA or pre-60S ribosome particles. Isoform 2 does not interact with NVL. Interacts with MTREX; the interaction dissociation in a late stage of rRNA synthesis is required for appropriate maturation of pre-60S particles and depends on the ATPase activity of NVL.

Its subcellular location is the nucleus. The protein localises to the nucleolus. In terms of biological role, regulatory protein of the MTREX-exosome complex involved in the synthesis of the 60S ribosomal subunit. Participates in an early cleavage of the pre-rRNA processing pathway in cooperation with NVL. Required for blastocyst formation, is necessary for RNA transcription, processing and/or stability during preimplantation development. The chain is WD repeat-containing protein 74 (Wdr74) from Mus musculus (Mouse).